The sequence spans 76 residues: cAMP-dependent protein kinase inhibitor alpha (76 aa).

T2 carries the post-translational modification N-acetylthreonine. The disordered stretch occupies residues 49–76 (KTEGEEDAQRSSTEQSGEAQGEAAKSES).

Belongs to the PKI family.

In terms of biological role, extremely potent competitive inhibitor of cAMP-dependent protein kinase activity, this protein interacts with the catalytic subunit of the enzyme after the cAMP-induced dissociation of its regulatory chains. This chain is cAMP-dependent protein kinase inhibitor alpha (PKIA), found in Homo sapiens (Human).